We begin with the raw amino-acid sequence, 180 residues long: uncharacterized protein (180 aa).

2 coiled-coil regions span residues 3–82 (LKSL…QKIA) and 95–179 (REYE…EKYG).

This is an uncharacterized protein from Aquifex aeolicus (strain VF5).